Reading from the N-terminus, the 122-residue chain is Phosphoribosyl-ATP pyrophosphatase (122 aa).

The protein belongs to the PRA-PH family.

The protein localises to the cytoplasm. It carries out the reaction 1-(5-phospho-beta-D-ribosyl)-ATP + H2O = 1-(5-phospho-beta-D-ribosyl)-5'-AMP + diphosphate + H(+). It functions in the pathway amino-acid biosynthesis; L-histidine biosynthesis; L-histidine from 5-phospho-alpha-D-ribose 1-diphosphate: step 2/9. In Cupriavidus metallidurans (strain ATCC 43123 / DSM 2839 / NBRC 102507 / CH34) (Ralstonia metallidurans), this protein is Phosphoribosyl-ATP pyrophosphatase.